Consider the following 257-residue polypeptide: Phycoerythrobilin:ferredoxin oxidoreductase (257 aa).

It belongs to the HY2 family.

The enzyme catalyses (3Z)-phycoerythrobilin + oxidized 2[4Fe-4S]-[ferredoxin] = 15,16-dihydrobiliverdin + reduced 2[4Fe-4S]-[ferredoxin] + 2 H(+). Its function is as follows. Catalyzes the two-electron reduction of the C2 and C3(1) diene system of 15,16-dihydrobiliverdin. The sequence is that of Phycoerythrobilin:ferredoxin oxidoreductase from Synechococcus sp. (strain CC9902).